A 325-amino-acid polypeptide reads, in one-letter code: Delta(1)-pyrroline-2-carboxylate reductase (325 aa).

The protein belongs to the ornithine cyclodeaminase/mu-crystallin family.

The enzyme catalyses L-proline + NAD(+) = 1-pyrroline-2-carboxylate + NADH + H(+). The catalysed reaction is L-proline + NADP(+) = 1-pyrroline-2-carboxylate + NADPH + H(+). Catalyzes the reduction of Delta(1)-pyrroline-2-carboxylate (Pyr2C) to L-proline, using preferentially NADPH over NADH as the electron donor. Is likely involved in a degradation pathway that converts trans-3-hydroxy-L-proline (t3LHyp) to L-proline. This Bacillus thuringiensis subsp. konkukian (strain 97-27) protein is Delta(1)-pyrroline-2-carboxylate reductase.